We begin with the raw amino-acid sequence, 500 residues long: 7-alpha-hydroxycholest-4-en-3-one 12-alpha-hydroxylase (500 aa).

A helical transmembrane segment spans residues 2-21; the sequence is VLWGLLGALLMVMVGWLCLP. Phosphoserine is present on S325. C439 is a heme binding site.

Belongs to the cytochrome P450 family. Heme serves as cofactor. As to expression, liver (at protein level).

Its subcellular location is the endoplasmic reticulum membrane. It localises to the microsome membrane. The enzyme catalyses 7alpha-hydroxycholest-4-en-3-one + reduced [NADPH--hemoprotein reductase] + O2 = 7alpha,12alpha-dihydroxycholest-4-en-3-one + oxidized [NADPH--hemoprotein reductase] + H2O + H(+). The catalysed reaction is 5beta-cholestane-3alpha,7alpha-diol + reduced [NADPH--hemoprotein reductase] + O2 = 5beta-cholestane-3alpha,7alpha,12alpha-triol + oxidized [NADPH--hemoprotein reductase] + H2O + H(+). It catalyses the reaction chenodeoxycholate + reduced [NADPH--hemoprotein reductase] + O2 = cholate + oxidized [NADPH--hemoprotein reductase] + H2O + H(+). Its pathway is lipid metabolism; bile acid biosynthesis. Its activity is regulated as follows. Up-regulated upon treatment with streptozotocin. Its function is as follows. A cytochrome P450 monooxygenase involved in primary bile acid biosynthesis. Catalyzes the 12alpha-hydroxylation of 7alpha-hydroxy-4-cholesten-3-one, an intermediate metabolite in cholic acid biosynthesis. Controls biliary balance of cholic acid and chenodeoxycholic acid, ultimately regulating the intestinal absorption of dietary lipids. Mechanistically, uses molecular oxygen inserting one oxygen atom into a substrate, and reducing the second into a water molecule, with two electrons provided by NADPH via cytochrome P450 reductase (CPR; NADPH--hemoprotein reductase). The chain is 7-alpha-hydroxycholest-4-en-3-one 12-alpha-hydroxylase (CYP8B1) from Oryctolagus cuniculus (Rabbit).